Reading from the N-terminus, the 393-residue chain is Trehalose import ATP-binding protein SugC (393 aa).

In terms of domain architecture, ABC transporter spans 4 to 235 (IVLDHVNKSY…PANLFVAGFI (232 aa)). 37–44 (GPSGCGKT) is a binding site for ATP. The short motif at 135-139 (LSGGQ) is the Helical C-loop; LSGGQ motif element.

The protein belongs to the ABC transporter superfamily. In terms of assembly, monomer. Homodimerizes in the presence of ATP. The complex is composed of two ATP-binding proteins (SugC), two transmembrane proteins (SugA and SugB) and a solute-binding protein (LpqY).

It is found in the cell inner membrane. It carries out the reaction alpha,alpha-trehalose(out) + ATP + H2O = alpha,alpha-trehalose(in) + ADP + phosphate + H(+). In terms of biological role, part of the ABC transporter complex LpqY-SugA-SugB-SugC, which is highly specific for uptake of trehalose. Involved in the recycling of extracellular trehalose released from trehalose-containing molecules synthesized by M.tuberculosis. Trehalose uptake is essential for virulence. Responsible for energy coupling to the transport system. The protein is Trehalose import ATP-binding protein SugC (sugC) of Mycobacterium tuberculosis (strain CDC 1551 / Oshkosh).